The following is a 379-amino-acid chain: UDP-N-acetylglucosamine--N-acetylmuramyl-(pentapeptide) pyrophosphoryl-undecaprenol N-acetylglucosamine transferase (379 aa).

UDP-N-acetyl-alpha-D-glucosamine contacts are provided by residues 10–12 (TAG), Asn-124, Arg-161, Ser-195, and Gln-291.

It belongs to the glycosyltransferase 28 family. MurG subfamily.

The protein localises to the cell membrane. The catalysed reaction is di-trans,octa-cis-undecaprenyl diphospho-N-acetyl-alpha-D-muramoyl-L-alanyl-D-glutamyl-meso-2,6-diaminopimeloyl-D-alanyl-D-alanine + UDP-N-acetyl-alpha-D-glucosamine = di-trans,octa-cis-undecaprenyl diphospho-[N-acetyl-alpha-D-glucosaminyl-(1-&gt;4)]-N-acetyl-alpha-D-muramoyl-L-alanyl-D-glutamyl-meso-2,6-diaminopimeloyl-D-alanyl-D-alanine + UDP + H(+). Its pathway is cell wall biogenesis; peptidoglycan biosynthesis. Functionally, cell wall formation. Catalyzes the transfer of a GlcNAc subunit on undecaprenyl-pyrophosphoryl-MurNAc-pentapeptide (lipid intermediate I) to form undecaprenyl-pyrophosphoryl-MurNAc-(pentapeptide)GlcNAc (lipid intermediate II). In Thermobifida fusca (strain YX), this protein is UDP-N-acetylglucosamine--N-acetylmuramyl-(pentapeptide) pyrophosphoryl-undecaprenol N-acetylglucosamine transferase.